We begin with the raw amino-acid sequence, 398 residues long: Succinate--CoA ligase [ADP-forming] subunit beta (398 aa).

An ATP-grasp domain is found at 9-253 (KQVLAKYGVA…ESEEDPAELE (245 aa)). Residues lysine 46, 53 to 55 (GRG), glutamate 108, cysteine 111, and glutamate 116 each bind ATP. 2 residues coordinate Mg(2+): asparagine 208 and aspartate 222. Substrate is bound by residues asparagine 273 and 330–332 (GIM).

This sequence belongs to the succinate/malate CoA ligase beta subunit family. In terms of assembly, heterotetramer of two alpha and two beta subunits. Mg(2+) serves as cofactor.

The catalysed reaction is succinate + ATP + CoA = succinyl-CoA + ADP + phosphate. The enzyme catalyses GTP + succinate + CoA = succinyl-CoA + GDP + phosphate. The protein operates within carbohydrate metabolism; tricarboxylic acid cycle; succinate from succinyl-CoA (ligase route): step 1/1. In terms of biological role, succinyl-CoA synthetase functions in the citric acid cycle (TCA), coupling the hydrolysis of succinyl-CoA to the synthesis of either ATP or GTP and thus represents the only step of substrate-level phosphorylation in the TCA. The beta subunit provides nucleotide specificity of the enzyme and binds the substrate succinate, while the binding sites for coenzyme A and phosphate are found in the alpha subunit. The polypeptide is Succinate--CoA ligase [ADP-forming] subunit beta (Paramagnetospirillum magneticum (strain ATCC 700264 / AMB-1) (Magnetospirillum magneticum)).